A 218-amino-acid chain; its full sequence is Glutathione S-transferase Mu 2 (218 aa).

The GST N-terminal domain occupies 2–88 (PIILGYWNIR…YIARKHNLCG (87 aa)). 7 to 8 (YW) is a glutathione binding site. Phosphoserine is present on residues Ser-27 and Ser-44. Glutathione-binding positions include 43 to 46 (RSQW), Lys-50, 59 to 60 (NL), and 72 to 73 (QS). The GST C-terminal domain occupies 90 to 208 (TEKEKIQEDI…KSSRFLPRPV (119 aa)). Tyr-116 contributes to the substrate binding site.

The protein belongs to the GST superfamily. Mu family. In terms of assembly, homodimer.

The protein resides in the cytoplasm. It carries out the reaction RX + glutathione = an S-substituted glutathione + a halide anion + H(+). The enzyme catalyses 11(S)-hydroxy-14(S),15(S)-epoxy-(5Z,8Z,12E)-eicosatrienoate + glutathione = (11S,15S)-dihydroxy-14(R)-S-glutathionyl-(5Z,8Z,12E)-eicosatrienoate. Conjugation of reduced glutathione to a wide number of exogenous and endogenous hydrophobic electrophiles. Participates in the formation of novel hepoxilin regioisomers. The protein is Glutathione S-transferase Mu 2 (GSTM2) of Pongo abelii (Sumatran orangutan).